The chain runs to 541 residues: Atlastin-3 (541 aa).

A disordered region spans residues 1–22 (MLSPQRTAAVASRGAGDAMENG). The interval 1–25 (MLSPQRTAAVASRGAGDAMENGKPG) is N-terminal hypervariable region (HVR). Residues 1–445 (MLSPQRTAAV…NVFSTFRTPA (445 aa)) are Cytoplasmic-facing. Positions 57 to 306 (DLDVVVVSVA…LIPYVLNPSK (250 aa)) constitute a GB1/RHD3-type G domain. The GDP site is built by R70, K71, G72, K73, S74, F75, and R109. D142 contributes to the Mg(2+) binding site. 4 residues coordinate GDP: R213, D214, V272, and S275. Residues 344–434 (MLQATAANNL…YENFCKHNGS (91 aa)) form a 3HB (three-helix bundle) domain region. K391 is subject to N6-acetyllysine. A helical transmembrane segment spans residues 446–466 (VLFTGIAVLYIASGLTGFIGL). E467 is a topological domain (lumenal). Residues 468 to 488 (VVAQLFNCMVGLLLIALLTWG) traverse the membrane as a helical segment. The Cytoplasmic segment spans residues 489–541 (YIRYSGQYLELGGAIDSGAAYVLEQASSHIGNSTQAAVRDAIAGRPPADKKSQ).

It belongs to the TRAFAC class dynamin-like GTPase superfamily. GB1/RHD3 GTPase family. GB1 subfamily. In terms of assembly, monomeric and homodimeric. The homodimer, transiently formed by two molecules on opposing membranes, is the active form mediating ER membrane fusion. Interacts with ZFYVE27; both proteins are involved in endoplasmic reticulum tubular network organization. Interacts with REEP5; both proteins are involved in endoplasmic reticulum tubular network organization.

The protein resides in the endoplasmic reticulum membrane. It catalyses the reaction GTP + H2O = GDP + phosphate + H(+). Its function is as follows. Atlastin-3 (ATL3) is a membrane-anchored GTPase that mediates the GTP-dependent fusion of endoplasmic reticulum (ER) membranes, maintaining the continuous ER network. It facilitates the formation of three-way junctions where ER tubules intersect. Two atlastin-3 on neighboring ER tubules bind GTP and form loose homodimers through the GB1/RHD3-type G domains and 3HB regions. Upon GTP hydrolysis, the 3HB regions tighten, pulling the membranes together to drive their fusion. After fusion, the homodimer disassembles upon release of inorganic phosphate (Pi). Subsequently, GDP dissociates, resetting the monomers to a conformation ready for a new fusion cycle. The protein is Atlastin-3 of Rattus norvegicus (Rat).